We begin with the raw amino-acid sequence, 193 residues long: Acyl carrier protein phosphodiesterase (193 aa).

Belongs to the AcpH family.

The catalysed reaction is holo-[ACP] + H2O = apo-[ACP] + (R)-4'-phosphopantetheine + H(+). Converts holo-ACP to apo-ACP by hydrolytic cleavage of the phosphopantetheine prosthetic group from ACP. The sequence is that of Acyl carrier protein phosphodiesterase from Escherichia coli O157:H7.